We begin with the raw amino-acid sequence, 119 residues long: Protein FAM24A-like (119 aa).

The first 40 residues, 1 to 40, serve as a signal peptide directing secretion; the sequence is MYKPFDLRTIITIIIGCGILTAMFLLIGLVLCLYSKISKA.

Belongs to the FAM24 family.

Its subcellular location is the secreted. In Mus musculus (Mouse), this protein is Protein FAM24A-like.